We begin with the raw amino-acid sequence, 502 residues long: Tyrosine-protein kinase receptor old-1 (502 aa).

Positions 1–19 (MKGTLIFVVFYSSYGFAHC) are cleaved as a signal peptide. Topologically, residues 20–58 (NTILRSSSLSRNFEDSLRRIPRSTDKDETGFEDSNVQEV) are extracellular. A helical membrane pass occupies residues 59–79 (IFILLYCLFVALAILICGLII). Over 80 to 502 (FYNSRKRELR…WLSDEKHCDS (423 aa)) the chain is Cytoplasmic. The tract at residues 99–140 (LLEPTSADHKRRNSSNIVPPEPTPYPITSGESDLRQTPSRLS) is disordered. A compositionally biased stretch (polar residues) spans 127 to 140 (SGESDLRQTPSRLS). Residues 175–473 (ISKGRPLGSG…ELKTTSNEYF (299 aa)) enclose the Protein kinase domain. ATP contacts are provided by residues 181 to 189 (LGSGEFGII) and K213. Residue D321 is the Proton acceptor of the active site.

It belongs to the protein kinase superfamily. Tyr protein kinase family.

It localises to the cell membrane. The catalysed reaction is L-tyrosyl-[protein] + ATP = O-phospho-L-tyrosyl-[protein] + ADP + H(+). Functionally, receptor tyrosine kinase which plays a role in promoting longevity and resistance to stresses including UV irradiation and high temperatures, probably downstream of daf-16. The polypeptide is Tyrosine-protein kinase receptor old-1 (Caenorhabditis elegans).